We begin with the raw amino-acid sequence, 201 residues long: Protocatechuate 3,4-dioxygenase alpha chain (201 aa).

Arg134 serves as a coordination point for 3,4-dihydroxybenzoate.

Belongs to the intradiol ring-cleavage dioxygenase family. In terms of assembly, the enzyme is an oligomer of 12 copies of the alpha and beta chains. Fe(3+) serves as cofactor.

The catalysed reaction is 3,4-dihydroxybenzoate + O2 = 3-carboxy-cis,cis-muconate + 2 H(+). The protein operates within aromatic compound metabolism; beta-ketoadipate pathway; 3-carboxy-cis,cis-muconate from 3,4-dihydroxybenzoate: step 1/1. Functionally, plays an essential role in the utilization of numerous aromatic and hydroaromatic compounds via the beta-ketoadipate pathway. In Pseudomonas putida (Arthrobacter siderocapsulatus), this protein is Protocatechuate 3,4-dioxygenase alpha chain (pcaG).